The chain runs to 348 residues: tRNA pseudouridine synthase D (348 aa).

Phe27 lines the substrate pocket. Residue Asp80 is the Nucleophile of the active site. Residue Asn129 coordinates substrate. The TRUD domain occupies 155 to 303 (GVPNYFGSQR…VESARRAVLL (149 aa)). Substrate is bound at residue Phe329.

It belongs to the pseudouridine synthase TruD family.

It catalyses the reaction uridine(13) in tRNA = pseudouridine(13) in tRNA. Its function is as follows. Responsible for synthesis of pseudouridine from uracil-13 in transfer RNAs. The protein is tRNA pseudouridine synthase D of Pectobacterium carotovorum subsp. carotovorum (strain PC1).